The following is a 72-amino-acid chain: Mitochondrial import receptor subunit TOM7-1 (72 aa).

Over 2–41 (LKPKGKNTKKAAAADEDDGAVAVVGKFVKEWGTWTAKKAK) the chain is Cytoplasmic. Residues 42–59 (VITHYGFIPLVIIIGMNS) traverse the membrane as a helical segment. The Mitochondrial intermembrane segment spans residues 60–72 (EPKPSLSQLLSPV).

It belongs to the Tom7 family. As to quaternary structure, forms part of the preprotein translocase complex of the outer mitochondrial membrane (TOM complex).

It is found in the mitochondrion outer membrane. Its function is as follows. Seems to act as a modulator of the dynamics of the mitochondrial protein transport machinery. Seems to promote the dissociation of subunits of the outer membrane translocase. The protein is Mitochondrial import receptor subunit TOM7-1 (TOM7-1) of Solanum tuberosum (Potato).